The primary structure comprises 510 residues: 2,3-bisphosphoglycerate-independent phosphoglycerate mutase (510 aa).

Mn(2+) contacts are provided by Asp15 and Ser65. The Phosphoserine intermediate role is filled by Ser65. Residues His126, 155-156 (RD), Arg187, Arg193, 259-262 (RPDR), and Lys332 each bind substrate. Mn(2+) contacts are provided by Asp399, His403, Asp440, His441, and His458.

This sequence belongs to the BPG-independent phosphoglycerate mutase family. Mn(2+) serves as cofactor.

The protein localises to the plastid. It is found in the chloroplast. It carries out the reaction (2R)-2-phosphoglycerate = (2R)-3-phosphoglycerate. It participates in carbohydrate degradation; glycolysis; pyruvate from D-glyceraldehyde 3-phosphate: step 3/5. In terms of biological role, catalyzes the interconversion of 2-phosphoglycerate and 3-phosphoglycerate. This chain is 2,3-bisphosphoglycerate-independent phosphoglycerate mutase, found in Antithamnion sp. (Red alga).